Here is an 80-residue protein sequence, read N- to C-terminus: Cell division protein ZapB (80 aa).

Residues 3–80 (FEVFEKLEAK…ALLGKMNEVN (78 aa)) are a coiled coil.

It belongs to the ZapB family. As to quaternary structure, homodimer. The ends of the coiled-coil dimer bind to each other, forming polymers. Interacts with FtsZ.

The protein localises to the cytoplasm. Its function is as follows. Non-essential, abundant cell division factor that is required for proper Z-ring formation. It is recruited early to the divisome by direct interaction with FtsZ, stimulating Z-ring assembly and thereby promoting cell division earlier in the cell cycle. Its recruitment to the Z-ring requires functional FtsA or ZipA. This Edwardsiella ictaluri (strain 93-146) protein is Cell division protein ZapB.